A 255-amino-acid polypeptide reads, in one-letter code: Fasciclin-like arabinogalactan protein 14 (255 aa).

The signal sequence occupies residues 1–23; the sequence is MSSSLTIFFFFFASTFLYTSSNS. The 146-residue stretch at 24–169 folds into the FAS1 domain; sequence FNITNILNEH…ISVLHISSAI (146 aa). Asn-25, Asn-99, Asn-125, and Asn-159 each carry an N-linked (GlcNAc...) asparagine glycan. The tract at residues 179 to 231 is disordered; it reads PTASPLSPVSSPPRPAESPNDDGQDFDEPPSSAPGAAADEPSENAGSANGVSR. Acidic residues predominate over residues 197–206; that stretch reads PNDDGQDFDE. Residues 222-231 show a composition bias toward polar residues; sequence NAGSANGVSR. The GPI-anchor amidated serine moiety is linked to residue Ser-225. Residues 226-255 constitute a propeptide, removed in mature form; that stretch reads ANGVSRNDSQPAFAFTLLMSFIWWFMARLR.

It belongs to the fasciclin-like AGP family.

It localises to the cell membrane. In terms of biological role, may be a cell surface adhesion protein. In Arabidopsis thaliana (Mouse-ear cress), this protein is Fasciclin-like arabinogalactan protein 14 (FLA14).